A 359-amino-acid chain; its full sequence is 4-hydroxy-3-methylbut-2-en-1-yl diphosphate synthase (flavodoxin) (359 aa).

The [4Fe-4S] cluster site is built by cysteine 264, cysteine 267, cysteine 299, and glutamate 306.

The protein belongs to the IspG family. The cofactor is [4Fe-4S] cluster.

The enzyme catalyses (2E)-4-hydroxy-3-methylbut-2-enyl diphosphate + oxidized [flavodoxin] + H2O + 2 H(+) = 2-C-methyl-D-erythritol 2,4-cyclic diphosphate + reduced [flavodoxin]. It functions in the pathway isoprenoid biosynthesis; isopentenyl diphosphate biosynthesis via DXP pathway; isopentenyl diphosphate from 1-deoxy-D-xylulose 5-phosphate: step 5/6. Its function is as follows. Converts 2C-methyl-D-erythritol 2,4-cyclodiphosphate (ME-2,4cPP) into 1-hydroxy-2-methyl-2-(E)-butenyl 4-diphosphate. The polypeptide is 4-hydroxy-3-methylbut-2-en-1-yl diphosphate synthase (flavodoxin) (Helicobacter pylori (strain Shi470)).